Consider the following 411-residue polypeptide: Secretion apparatus protein BsaZ (411 aa).

4 helical membrane passes run 28-48 (IVAL…VDLT), 80-100 (IAAP…LVQS), 137-157 (ALLY…LYHA), and 175-195 (IVLT…VLIL). Residues 341 to 411 (AANRGGPPPE…APARTGDQNA (71 aa)) are disordered. Residues 370–404 (DACADNAFPDDAPPGAAAPNAGSPDGPAPDGGAPA) are compositionally biased toward low complexity.

The protein belongs to the type III secretion exporter family.

Its subcellular location is the cell membrane. Part of the bsa type III secretion system, is involved in the intracellular replication of invading bacteria inside the host cell. Probably necessary for the lysis of the vacuole membrane and escape into the host cell cytoplasm. In Burkholderia pseudomallei (strain K96243), this protein is Secretion apparatus protein BsaZ (bsaZ).